The following is a 95-amino-acid chain: Large ribosomal subunit protein bL25 (95 aa).

Belongs to the bacterial ribosomal protein bL25 family. As to quaternary structure, part of the 50S ribosomal subunit; part of the 5S rRNA/L5/L18/L25 subcomplex. Contacts the 5S rRNA. Binds to the 5S rRNA independently of L5 and L18.

In terms of biological role, this is one of the proteins that binds to the 5S RNA in the ribosome where it forms part of the central protuberance. The chain is Large ribosomal subunit protein bL25 from Shewanella amazonensis (strain ATCC BAA-1098 / SB2B).